The sequence spans 187 residues: Core-binding factor subunit beta (187 aa).

Position 10 is a phosphoserine; by CK2 (Ser10). The segment at 139-187 (AQQAFEEARRRTREFEDRDRSHREEMEARRQQDPSPGSNLGGGDDLKLR) is disordered. Positions 144 to 170 (EEARRRTREFEDRDRSHREEMEARRQQ) are enriched in basic and acidic residues. Ser159 is subject to Phosphoserine; by PKC.

The protein belongs to the CBF-beta family. Heterodimer with RUNX1, RUNX2 and RUNX3. Interacts with COPRS. Found in a complex with PRMT5 and RUNX1. Expressed in all tissues tested. Highest level in thymus, but also abundantly expressed in muscle, lung and brain.

The protein localises to the nucleus. Functionally, forms the heterodimeric complex core-binding factor (CBF) with RUNX family proteins (RUNX1, RUNX2, and RUNX3). RUNX members modulate the transcription of their target genes through recognizing the core consensus binding sequence 5'-TGTGGT-3', or very rarely, 5'-TGCGGT-3', within their regulatory regions via their runt domain, while CBFB is a non-DNA-binding regulatory subunit that allosterically enhances the sequence-specific DNA-binding capacity of RUNX. The heterodimers bind to the core site of a number of enhancers and promoters, including murine leukemia virus, polyomavirus enhancer, T-cell receptor enhancers, LCK, IL3 and GM-CSF promoters. CBF complexes repress ZBTB7B transcription factor during cytotoxic (CD8+) T cell development. They bind to RUNX-binding sequence within the ZBTB7B locus acting as transcriptional silencer and allowing for cytotoxic T cell differentiation. The sequence is that of Core-binding factor subunit beta (Cbfb) from Mus musculus (Mouse).